A 279-amino-acid chain; its full sequence is NH(3)-dependent NAD(+) synthetase (279 aa).

40–47 (GLSGGIDS) serves as a coordination point for ATP. Mg(2+) is bound at residue aspartate 46. Arginine 122 serves as a coordination point for deamido-NAD(+). Residue threonine 142 coordinates ATP. Residue glutamate 147 coordinates Mg(2+). Positions 155 and 162 each coordinate deamido-NAD(+). Positions 171 and 193 each coordinate ATP. 253 to 254 (HK) lines the deamido-NAD(+) pocket.

This sequence belongs to the NAD synthetase family. Homodimer.

The enzyme catalyses deamido-NAD(+) + NH4(+) + ATP = AMP + diphosphate + NAD(+) + H(+). The protein operates within cofactor biosynthesis; NAD(+) biosynthesis; NAD(+) from deamido-NAD(+) (ammonia route): step 1/1. Functionally, catalyzes the ATP-dependent amidation of deamido-NAD to form NAD. Uses ammonia as a nitrogen source. The protein is NH(3)-dependent NAD(+) synthetase of Sulfurisphaera tokodaii (strain DSM 16993 / JCM 10545 / NBRC 100140 / 7) (Sulfolobus tokodaii).